The sequence spans 77 residues: Exodeoxyribonuclease 7 small subunit (77 aa).

It belongs to the XseB family. As to quaternary structure, heterooligomer composed of large and small subunits.

It is found in the cytoplasm. It carries out the reaction Exonucleolytic cleavage in either 5'- to 3'- or 3'- to 5'-direction to yield nucleoside 5'-phosphates.. Its function is as follows. Bidirectionally degrades single-stranded DNA into large acid-insoluble oligonucleotides, which are then degraded further into small acid-soluble oligonucleotides. The sequence is that of Exodeoxyribonuclease 7 small subunit from Clostridium acetobutylicum (strain ATCC 824 / DSM 792 / JCM 1419 / IAM 19013 / LMG 5710 / NBRC 13948 / NRRL B-527 / VKM B-1787 / 2291 / W).